The sequence spans 349 residues: Beta-glucanase (349 aa).

Positions Met1–Ala27 are cleaved as a signal peptide. The region spanning Lys28–Gly197 is the GH16 domain. Glu79 functions as the Nucleophile in the catalytic mechanism. Glu83 acts as the Proton donor in catalysis. Residues Ser258–Ile311 form a disordered region. Residues Ala270–Ala307 are compositionally biased toward low complexity. 5 tandem repeats follow at residues Pro271–Ala277, Pro278–Val284, Pro285–Val291, Pro292–Ala298, and Pro301–Ala307. Residues Pro271–Ala307 are 5 X 7 AA tandem repeats of P-X-S-S-S-S-X.

It belongs to the glycosyl hydrolase 16 family.

The catalysed reaction is Hydrolysis of (1-&gt;4)-beta-D-glucosidic linkages in beta-D-glucans containing (1-&gt;3)- and (1-&gt;4)-bonds.. This is Beta-glucanase from Fibrobacter succinogenes (strain ATCC 19169 / S85).